The sequence spans 470 residues: ATP synthase subunit beta (470 aa).

Residue 157 to 164 coordinates ATP; the sequence is GGAGVGKT.

The protein belongs to the ATPase alpha/beta chains family. As to quaternary structure, F-type ATPases have 2 components, CF(1) - the catalytic core - and CF(0) - the membrane proton channel. CF(1) has five subunits: alpha(3), beta(3), gamma(1), delta(1), epsilon(1). CF(0) has three main subunits: a(1), b(2) and c(9-12). The alpha and beta chains form an alternating ring which encloses part of the gamma chain. CF(1) is attached to CF(0) by a central stalk formed by the gamma and epsilon chains, while a peripheral stalk is formed by the delta and b chains.

The protein resides in the cell inner membrane. The catalysed reaction is ATP + H2O + 4 H(+)(in) = ADP + phosphate + 5 H(+)(out). Its function is as follows. Produces ATP from ADP in the presence of a proton gradient across the membrane. The catalytic sites are hosted primarily by the beta subunits. In Geobacter metallireducens (strain ATCC 53774 / DSM 7210 / GS-15), this protein is ATP synthase subunit beta.